The chain runs to 921 residues: Protein translocase subunit SecA (921 aa).

ATP contacts are provided by residues glutamine 87, 105-109 (GEGKT), and aspartate 515. The segment at 575–594 (RRIDNQLRGRSGRQGDPGSS) is disordered. Residues cysteine 905, cysteine 907, cysteine 916, and cysteine 917 each coordinate Zn(2+).

The protein belongs to the SecA family. Monomer and homodimer. Part of the essential Sec protein translocation apparatus which comprises SecA, SecYEG and auxiliary proteins SecDF-YajC and YidC. Zn(2+) is required as a cofactor.

It localises to the cell inner membrane. It is found in the cytoplasm. It carries out the reaction ATP + H2O + cellular proteinSide 1 = ADP + phosphate + cellular proteinSide 2.. Functionally, part of the Sec protein translocase complex. Interacts with the SecYEG preprotein conducting channel. Has a central role in coupling the hydrolysis of ATP to the transfer of proteins into and across the cell membrane, serving both as a receptor for the preprotein-SecB complex and as an ATP-driven molecular motor driving the stepwise translocation of polypeptide chains across the membrane. The sequence is that of Protein translocase subunit SecA from Polynucleobacter necessarius subsp. necessarius (strain STIR1).